We begin with the raw amino-acid sequence, 528 residues long: Ivanolysin (528 aa).

Residues 1–23 form the signal peptide; the sequence is MKKIMLLLMTLLLVSLPLAQEAQ. 4 beta stranded membrane-spanning segments follow: residues 213-226, 233-242, 311-320, and 328-340; these read ESQL…AFKA, VNFGAISEGK, STRVKAAFDT, and KGDT…IQNA. Positions 482 to 492 match the Conserved undecapeptide motif; sequence ECTGLAWEWWR. The short motif at 514–515 is the Cholesterol binding element; sequence TL.

The protein belongs to the cholesterol-dependent cytolysin family. In terms of assembly, homooligomeric pore complex of 35 to 50 subunits; when inserted in the host membrane.

It is found in the secreted. The protein localises to the host membrane. Functionally, a cholesterol-dependent toxin that causes cytolysis by forming pores in cholesterol containing host membranes. After binding to target membranes, the protein undergoes a major conformation change, leading to its insertion in the host membrane and formation of an oligomeric pore complex. Cholesterol is required for binding to host membranes, membrane insertion and pore formation; cholesterol binding is mediated by a Thr-Leu pair in the C-terminus. Can be reversibly inactivated by oxidation. The protein is Ivanolysin (ilo) of Listeria ivanovii.